We begin with the raw amino-acid sequence, 354 residues long: 40 kDa protein (354 aa).

As to quaternary structure, interacts with capsid protein; this interaction may play a role in vector transmission of the virus.

Functionally, involved in transmission of the virus by the vector nematode Paratrichodorus pachydermus. This Bidens pilosa (Hairy beggarticks) protein is 40 kDa protein.